The sequence spans 287 residues: MAVVTMKQLLDSGTHFGHQTRRWNPKMKRFIFTDRNGIYIIDLQQTLTFIDKAYEFVKETVAHGGSVLFVGTKKQAQESVAAEATRVGMPYVNQRWLGGMLTNFSTVHKRLQRLKELEAMEQTGGFEGRTKKEILGLTREKNKLERSLGGIRDMAKVPSAIWVVDTNKEHIAVGEARKLGIPVIAILDTNCDPDEVDYPIPGNDDAIRSAALLTRVIASAVAEGLQARAGLGRADGKPEAEAAEPLAEWEQELLASATASATPSATASTTALTDAPAGATEPTTDAS.

The span at 254–277 (LASATASATPSATASTTALTDAPA) shows a compositional bias: low complexity. Residues 254–287 (LASATASATPSATASTTALTDAPAGATEPTTDAS) are disordered.

This sequence belongs to the universal ribosomal protein uS2 family.

The sequence is that of Small ribosomal subunit protein uS2 (rpsB) from Mycobacterium tuberculosis (strain CDC 1551 / Oshkosh).